A 456-amino-acid chain; its full sequence is MKIEEVKSTTKTQRIASHSHVKGLGLDESGLAKQAASGLVGQENAREACGVIVELIKSKKMAGRAVLLAGPPGTGKTALALAIAQELGSKVPFCPMVGSEVYSTEIKKTEVLMENFRRAIGLRIKETKEVYEGEVTELTPCETENPMGGYGKTISHVIIGLKTAKGTKQLKLDPSIFESLQKERVEAGDVIYIEANSGAVKRQGRCDTYATEFDLEAEEYVPLPKGDVHKKKEIIQDVTLHDLDVANARPQGGQDILSMMGQLMKPKKTEITDKLRGEINKVVNKYIDQGIAELVPGVLFVDEVHMLDIECFTYLHRALESSIAPIVIFASNRGNCVIRGTEDITSPHGIPLDLLDRVMIIRTMLYTPQEMKQIIKIRAQTEGINISEEALNHLGEIGTKTTLRYSVQLLTPANLLAKINGKDSIEKEHVEEISELFYDAKSSAKILADQQDKYMK.

A Glycyl lysine isopeptide (Lys-Gly) (interchain with G-Cter in SUMO2) cross-link involves residue lysine 2. ATP is bound at residue 70–77 (GPPGTGKT). Lysine 225 is covalently cross-linked (Glycyl lysine isopeptide (Lys-Gly) (interchain with G-Cter in SUMO1); alternate). A Glycyl lysine isopeptide (Lys-Gly) (interchain with G-Cter in SUMO2); alternate cross-link involves residue lysine 225. Residue lysine 445 forms a Glycyl lysine isopeptide (Lys-Gly) (interchain with G-Cter in SUMO2) linkage. Lysine 453 bears the N6-acetyllysine mark.

It belongs to the RuvB family. In terms of assembly, forms homohexameric rings. Can form a dodecamer with RUVBL2 made of two stacked hexameric rings; however, even though RUVBL1 and RUVBL2 are present in equimolar ratio, the oligomeric status of each hexamer is not known. Oligomerization may regulate binding to nucleic acids and conversely, binding to nucleic acids may affect the dodecameric assembly. Interaction of the complex with DHX34 results in conformational changes of the N-terminus of the RUVBL2 subunits, resulting in loss of nucleotide binding ability and ATP hydrolysis of the complex. Interacts with the transcriptional activation domain of MYC. Component of the RNA polymerase II holoenzyme complex. May also act to bridge the LEF1/TCF1-CTNNB1 complex and TBP. Component of the NuA4 histone acetyltransferase complex which contains the catalytic subunit KAT5/TIP60 and the subunits EP400, TRRAP/PAF400, BRD8/SMAP, EPC1, DMAP1/DNMAP1, RUVBL1/TIP49, RUVBL2, ING3, actin, ACTL6A/BAF53A, MORF4L1/MRG15, MORF4L2/MRGX, MRGBP, YEATS4/GAS41, VPS72/YL1 and MEAF6. The NuA4 complex interacts with MYC and the adenovirus E1A protein. RUVBL1 interacts with EP400. Component of a NuA4-related complex which contains EP400, TRRAP/PAF400, SRCAP, BRD8/SMAP, EPC1, DMAP1/DNMAP1, RUVBL1/TIP49, RUVBL2, actin, ACTL6A/BAF53A, VPS72 and YEATS4/GAS41. Component of the BAF53 complex, at least composed of ACTL6A/BAF53A, RUVBL1/TIP49, SMARCA2/BRM, and TRRAP/PAF400. Component of some MLL1/MLL complex, at least composed of the core components KMT2A/MLL1, ASH2L, HCFC1/HCF1, WDR5 and RBBP5, as well as the facultative components BACC1, CHD8, E2F6, HSP70, INO80C, KANSL1, LAS1L, MAX, MCRS1, MGA, MYST1/MOF, PELP1, PHF20, PRP31, RING2, RUVB1/TIP49A, RUVB2/TIP49B, SENP3, TAF1, TAF4, TAF6, TAF7, TAF9 and TEX10. Associates with alpha and gamma tubulins, particularly during metaphase and early anaphase. Interacts with NPAT. Component of the chromatin-remodeling INO80 complex; specifically part of a complex module associated with the helicase ATP-binding and the helicase C-terminal domain of INO80. Interacts with IGHMBP2. Interacts with OFD1. Interacts with HINT1. Component of a complex with USP49 and PSMC5. Component of a SWR1-like complex. Component of the R2TP complex composed at least of RUVBL1, RUVBL2, RPAP3 and PIHD1. Component of the PAQosome complex which is responsible for the biogenesis of several protein complexes and which consists of R2TP complex members RUVBL1, RUVBL2, RPAP3 and PIH1D1, URI complex members PFDN2, PFDN6, PDRG1, UXT and URI1 as well as ASDURF, POLR2E and DNAAF10/WDR92. Interacts with PIH1D1. Interacts with ITFG1. Interacts with WAC; WAC positively regulates MTOR activity by promoting the assembly of the TTT complex composed of TELO2, TTI1 and TTI2 and the RUVBL complex composed of RUVBL1 and RUVBL2 into the TTT-RUVBL complex which leads to the dimerization of the mTORC1 complex and its subsequent activation. The RUVBL1/RUVBL2 complex interacts with ZNHIT1 (via HIT-type zinc finger), ZNHIT3 (via HIT-type zinc finger), ZNHIT6 (via HIT-type zinc finger) and DDX59/ZNHIT5 (via HIT-type zinc finger) in the presence of ADP. Interacts with NOPCHAP1; the interaction is direct and disrupted upon ATP binding. Interacts with SMG1. Interacts with NOP2, NOP56 and NUFIP1. As to quaternary structure, (Microbial infection) Interacts with Mumps L polymerase; this interaction regulates the viral transcription. As to expression, ubiquitously expressed with high expression in heart, skeletal muscle and testis.

It localises to the nucleus matrix. Its subcellular location is the nucleus. The protein localises to the nucleoplasm. It is found in the cytoplasm. The protein resides in the membrane. It localises to the cytoskeleton. Its subcellular location is the microtubule organizing center. The protein localises to the centrosome. It is found in the dynein axonemal particle. The enzyme catalyses ATP + H2O = ADP + phosphate + H(+). Its function is as follows. Possesses single-stranded DNA-stimulated ATPase and ATP-dependent DNA helicase (3' to 5') activity; hexamerization is thought to be critical for ATP hydrolysis and adjacent subunits in the ring-like structure contribute to the ATPase activity. Component of the NuA4 histone acetyltransferase complex which is involved in transcriptional activation of select genes principally by acetylation of nucleosomal histones H4 and H2A. This modification may both alter nucleosome-DNA interactions and promote interaction of the modified histones with other proteins which positively regulate transcription. This complex may be required for the activation of transcriptional programs associated with oncogene and proto-oncogene mediated growth induction, tumor suppressor mediated growth arrest and replicative senescence, apoptosis, and DNA repair. The NuA4 complex ATPase and helicase activities seem to be, at least in part, contributed by the association of RUVBL1 and RUVBL2 with EP400. NuA4 may also play a direct role in DNA repair when recruited to sites of DNA damage. Component of a SWR1-like complex that specifically mediates the removal of histone H2A.Z/H2AZ1 from the nucleosome. Proposed core component of the chromatin remodeling INO80 complex which exhibits DNA- and nucleosome-activated ATPase activity and catalyzes ATP-dependent nucleosome sliding. Plays an essential role in oncogenic transformation by MYC and also modulates transcriptional activation by the LEF1/TCF1-CTNNB1 complex. Essential for cell proliferation. May be able to bind plasminogen at cell surface and enhance plasminogen activation. The protein is RuvB-like 1 of Homo sapiens (Human).